A 113-amino-acid polypeptide reads, in one-letter code: MKSLRVLLVILWLQLSWVWSQQKEVEQNSGPLSVPEGAIASLNCTYSDRGSQSFFWYRQYSGKSPELIMFIYSNGDKEDGRFTAQLNKASQYVSLLIRDSQPSDSATYLCAVN.

Positions 1–20 (MKSLRVLLVILWLQLSWVWS) are cleaved as a signal peptide. The region spanning 23–113 (KEVEQNSGPL…DSATYLCAVN (91 aa)) is the Ig-like domain. Residue asparagine 43 is glycosylated (N-linked (GlcNAc...) asparagine). The cysteines at positions 44 and 110 are disulfide-linked.

As to quaternary structure, alpha-beta TR is a heterodimer composed of an alpha and beta chain; disulfide-linked. The alpha-beta TR is associated with the transmembrane signaling CD3 coreceptor proteins to form the TR-CD3 (TcR or TCR). The assembly of alpha-beta TR heterodimers with CD3 occurs in the endoplasmic reticulum where a single alpha-beta TR heterodimer associates with one CD3D-CD3E heterodimer, one CD3G-CD3E heterodimer and one CD247 homodimer forming a stable octameric structure. CD3D-CD3E and CD3G-CD3E heterodimers preferentially associate with TR alpha and TR beta chains, respectively. The association of the CD247 homodimer is the last step of TcR assembly in the endoplasmic reticulum and is required for transport to the cell surface.

The protein resides in the cell membrane. Its function is as follows. V region of the variable domain of T cell receptor (TR) alpha chain that participates in the antigen recognition. Alpha-beta T cell receptors are antigen specific receptors which are essential to the immune response and are present on the cell surface of T lymphocytes. Recognize peptide-major histocompatibility (MH) (pMH) complexes that are displayed by antigen presenting cells (APC), a prerequisite for efficient T cell adaptive immunity against pathogens. Binding of alpha-beta TR to pMH complex initiates TR-CD3 clustering on the cell surface and intracellular activation of LCK that phosphorylates the ITAM motifs of CD3G, CD3D, CD3E and CD247 enabling the recruitment of ZAP70. In turn ZAP70 phosphorylates LAT, which recruits numerous signaling molecules to form the LAT signalosome. The LAT signalosome propagates signal branching to three major signaling pathways, the calcium, the mitogen-activated protein kinase (MAPK) kinase and the nuclear factor NF-kappa-B (NF-kB) pathways, leading to the mobilization of transcription factors that are critical for gene expression and essential for T cell growth and differentiation. The T cell repertoire is generated in the thymus, by V-(D)-J rearrangement. This repertoire is then shaped by intrathymic selection events to generate a peripheral T cell pool of self-MH restricted, non-autoaggressive T cells. Post-thymic interaction of alpha-beta TR with the pMH complexes shapes TR structural and functional avidity. This Homo sapiens (Human) protein is T cell receptor alpha variable 12-2.